We begin with the raw amino-acid sequence, 619 residues long: Trihelix transcription factor GTL2 (619 aa).

2 disordered regions span residues 11-41 (HRFI…VSFS) and 62-100 (HHHH…HHHH). Residues 16 to 27 (SPPPPPPLPPHQ) show a composition bias toward pro residues. The 53-residue stretch at 102–154 (PWCSDEVLALLRFRSTVENWFPEFTWEHTSRKLAEVGFKRSPQECKEKFEEEE) folds into the Myb-like 1 domain. Residues 307–361 (VRNMIAQQEEMHKKLLEDMVKKEEEKIAREEAWKKQEIERVNKEVEIRAQEQAMA) adopt a coiled-coil conformation. Disordered regions lie at residues 382–414 (VVQN…SSLL) and 434–458 (STKT…DLGK). The span at 384 to 396 (QNPTSPSQDSSSL) shows a compositional bias: polar residues. Residues 435 to 444 (TKTLKPKNQN) show a composition bias toward low complexity. Positions 448-458 (PKSDDKSDLGK) are enriched in basic and acidic residues. The Myb-like 2 domain occupies 459–526 (RWPKDEVLAL…RCKEKWENIN (68 aa)). A Nuclear localization signal motif is present at residues 503–510 (SKKMLEIG). The disordered stretch occupies residues 557–619 (SQPPTGTTAT…VQFSGFDLEF (63 aa)). Positions 561 to 574 (TGTTATTATTATSA) are enriched in low complexity. Over residues 575–585 (RDLDTRPEENR) the composition is skewed to basic and acidic residues.

It localises to the nucleus. Probable transcription factor that binds specific DNA sequence. The polypeptide is Trihelix transcription factor GTL2 (Arabidopsis thaliana (Mouse-ear cress)).